Reading from the N-terminus, the 119-residue chain is Ribonuclease P protein component (119 aa).

This sequence belongs to the RnpA family. As to quaternary structure, consists of a catalytic RNA component (M1 or rnpB) and a protein subunit.

It catalyses the reaction Endonucleolytic cleavage of RNA, removing 5'-extranucleotides from tRNA precursor.. RNaseP catalyzes the removal of the 5'-leader sequence from pre-tRNA to produce the mature 5'-terminus. It can also cleave other RNA substrates such as 4.5S RNA. The protein component plays an auxiliary but essential role in vivo by binding to the 5'-leader sequence and broadening the substrate specificity of the ribozyme. The chain is Ribonuclease P protein component from Halalkalibacterium halodurans (strain ATCC BAA-125 / DSM 18197 / FERM 7344 / JCM 9153 / C-125) (Bacillus halodurans).